The following is a 2260-amino-acid chain: Reducing polyketide synthase pksF (2260 aa).

Positions 20–445 (VEPIAIVGFG…GTNAHVVLDD (426 aa)) constitute a Ketosynthase family 3 (KS3) domain. Catalysis depends on for beta-ketoacyl synthase activity residues Cys194, His329, and His368. The segment at 598 to 933 (FVFTGQGAQW…ECAGKLHTIG (336 aa)) is malonyl-CoA:ACP transacylase (MAT) domain. Residue Ser689 is the For malonyltransferase activity of the active site. Residues 984–1121 (HELLGSRTPD…GYVAIEYDDR (138 aa)) are N-terminal hotdog fold. The segment at 984–1281 (HELLGSRTPD…FRNKLFSITA (298 aa)) is dehydratase (DH) domain. Residues 984-1306 (HELLGSRTPD…TSTIGRNSPS (323 aa)) form the PKS/mFAS DH domain. Residue His1016 is the Proton acceptor; for dehydratase activity of the active site. The tract at residues 1150–1306 (RIAIDSADIY…TSTIGRNSPS (157 aa)) is C-terminal hotdog fold. The Proton donor; for dehydratase activity role is filled by Asp1216. An enoylreductase (ER) domain region spans residues 1544–1859 (GILKTLHYEQ…DVDVVEKIVI (316 aa)). The interval 1882 to 2104 (PDASYLIAGA…LRFCCDPDRV (223 aa)) is ketoreductase (KR) domain. The Carrier domain occupies 2174-2251 (QATDIVVEAI…LLAVKVAGKS (78 aa)). Ser2211 carries the O-(pantetheine 4'-phosphoryl)serine modification.

The cofactor is pantetheine 4'-phosphate.

In terms of biological role, reducing polyketide synthase that catalyzes the formation of a C22 intermediate attached to the ACP. Release by intramolecular hydrolysis by the enolized delta-carbonyl would give the pyrone product aslanipyrone. Alternatively, KR-mediated reduction of the beta-carbonyl of the C22 intermediate would form a beta-hydroxy thioester intermediate, which could be a substrate for a further KS-mediated condensation of an additional C2 unit to form a C24 intermediate, which cyclizes by aldol condensation followed by decarboxylation to form aslaniol. Neither aslanipyrone, aslaniol, nor their derivatives have been detected in A.solani, probably due to a low abundance and/or extensive post-PKS modification. It is assumed that the branching point from C22 to C24 is the result of KR activity on the C22 intermediate anchored to the ACP. This Alternaria solani protein is Reducing polyketide synthase pksF.